Consider the following 394-residue polypeptide: MNKKSIRDVDLKGKRVFCRVDFNVPMKEGKITDETRIRAALPTIQYLVEQGAKVILASHLGRPKGQAVEELRLTPVAARLGELLGKDVKKADEAFGPVAQEMVAAMNEGDVLVLENVRFYAGEEKNDAELAKEFAALADIFVNDAFGAAHRAHASTAGIADYLPAVSGLLMEKELEVLGKALSNPERPFTAIIGGAKVKDKIGVIRHLLDKVDNLIIGGGLAYTFVKALGHEIGLSLCEDDKIELAKEFMQLAKEKGVNFYMPVDVVITEEFSETATTKIVGIDSIPSNWEGVDIGPKTREIYADVIKNSKLVVWNGPMGVFEMTPFSQGTKAVGQALADAEGTYSVIGGGDSAAAVEKFGMADKMSHISTGGGASLEFMEGKELPGVVCLNDK.

Substrate contacts are provided by residues 21 to 23, R36, 59 to 62, R118, and R151; these read DFN and HLGR. A Phosphoserine modification is found at S183. K201 and G292 together coordinate ATP. Position 299 is a phosphothreonine (T299). ATP contacts are provided by residues E323 and 350–353; that span reads GGDS.

The protein belongs to the phosphoglycerate kinase family. Monomer.

It is found in the cytoplasm. The catalysed reaction is (2R)-3-phosphoglycerate + ATP = (2R)-3-phospho-glyceroyl phosphate + ADP. The protein operates within carbohydrate degradation; glycolysis; pyruvate from D-glyceraldehyde 3-phosphate: step 2/5. The polypeptide is Phosphoglycerate kinase (Bacillus thuringiensis subsp. konkukian (strain 97-27)).